We begin with the raw amino-acid sequence, 125 residues long: Splicing factor 3B subunit 6 (125 aa).

The interval 16–29 (EVNRILYIRNLPYK) is interaction with pre-mRNA branch site. The 76-residue stretch at 19–94 (RILYIRNLPY…RYLVVLYYNA (76 aa)) folds into the RRM domain. Lys29 is subject to N6-acetyllysine; alternate. Lys29 is covalently cross-linked (Glycyl lysine isopeptide (Lys-Gly) (interchain with G-Cter in SUMO2); alternate). Lys41 carries the post-translational modification N6-acetyllysine.

In terms of assembly, component of the 17S U2 SnRNP complex, a ribonucleoprotein complex that contains small nuclear RNA (snRNA) U2 and a number of specific proteins. Part of the SF3B subcomplex of the 17S U2 SnRNP complex. SF3B associates with the splicing subcomplex SF3A and a 12S RNA unit to form the U2 small nuclear ribonucleoproteins complex (U2 snRNP). Within the SF3B complex interacts directly with SF3B1. Component of the minor spliceosome, which splices U12-type introns.

It localises to the nucleus. Functionally, component of the 17S U2 SnRNP complex of the spliceosome, a large ribonucleoprotein complex that removes introns from transcribed pre-mRNAs. The 17S U2 SnRNP complex (1) directly participates in early spliceosome assembly and (2) mediates recognition of the intron branch site during pre-mRNA splicing by promoting the selection of the pre-mRNA branch-site adenosine, the nucleophile for the first step of splicing. Within the 17S U2 SnRNP complex, SF3B6 is part of the SF3B subcomplex, which is required for 'A' complex assembly formed by the stable binding of U2 snRNP to the branchpoint sequence in pre-mRNA. Sequence independent binding of SF3A and SF3B subcomplexes upstream of the branch site is essential, it may anchor U2 snRNP to the pre-mRNA. Within the 17S U2 SnRNP complex, SF3B6 directly contacts the pre-mRNA branch site adenosine for the first catalytic step of splicing. SF3B6 stabilizes the intron branch site-U2 snRNA duplex, thereby promoting-binding of introns with poor sequence complementarity. Also acts as a component of the minor spliceosome, which is involved in the splicing of U12-type introns in pre-mRNAs. The protein is Splicing factor 3B subunit 6 (Sf3b6) of Mus musculus (Mouse).